Here is a 100-residue protein sequence, read N- to C-terminus: Integration host factor subunit alpha (100 aa).

This sequence belongs to the bacterial histone-like protein family. In terms of assembly, heterodimer of an alpha and a beta chain.

Its function is as follows. This protein is one of the two subunits of integration host factor, a specific DNA-binding protein that functions in genetic recombination as well as in transcriptional and translational control. In Erythrobacter litoralis (strain HTCC2594), this protein is Integration host factor subunit alpha.